Consider the following 67-residue polypeptide: Small ribosomal subunit protein bS21 (67 aa).

The protein belongs to the bacterial ribosomal protein bS21 family.

This is Small ribosomal subunit protein bS21 from Magnetococcus marinus (strain ATCC BAA-1437 / JCM 17883 / MC-1).